The sequence spans 745 residues: Translation initiation factor IF-2 (745 aa).

Residues 1–154 form a disordered region; sequence MSDKPRRDTG…PAARPVVRPR (154 aa). Residues 36-56 show a composition bias toward polar residues; it reads TGRSPNASTGGNRSAGNQAGN. Over residues 68 to 98 the composition is skewed to low complexity; that stretch reads ATTPAPNRNTPPAGARQGGAANARTGTPPVA. The segment covering 99 to 113 has biased composition (gly residues); the sequence is RGGGGGVTPPTGRGG. Low complexity predominate over residues 114–126; the sequence is NNPRAARNQPRSR. Residues 127–138 are compositionally biased toward basic and acidic residues; that stretch reads QQPEEREREHVL. Positions 241–410 constitute a tr-type G domain; that stretch reads PRPPVVTIMG…LLVADLEDLR (170 aa). Residues 250–257 form a G1 region; that stretch reads GHVDHGKT. Residue 250 to 257 participates in GTP binding; it reads GHVDHGKT. A G2 region spans residues 275-279; sequence GITQH. Positions 296–299 are G3; sequence DTPG. GTP-binding positions include 296 to 300 and 350 to 353; these read DTPGH and NKID. The segment at 350-353 is G4; it reads NKID. The tract at residues 386-388 is G5; sequence SAR.

Belongs to the TRAFAC class translation factor GTPase superfamily. Classic translation factor GTPase family. IF-2 subfamily.

The protein resides in the cytoplasm. Its function is as follows. One of the essential components for the initiation of protein synthesis. Protects formylmethionyl-tRNA from spontaneous hydrolysis and promotes its binding to the 30S ribosomal subunits. Also involved in the hydrolysis of GTP during the formation of the 70S ribosomal complex. The sequence is that of Translation initiation factor IF-2 from Chloroflexus aurantiacus (strain ATCC 29366 / DSM 635 / J-10-fl).